The sequence spans 719 residues: MALTKLRFVNQFSQWLCVRKGYIHSLPENLAALQKAIEVLKTKHDDVKRRVDKEEFLGRRHRLSQVQVEIERLCFCGFCSKSFGKSYHYGKMVSVMLKEVENLSSRGVFDVVTEENLVAQVEEMPIQSTVVGQETMLERVWNTLMKDGFKIMGLYGMGGVGKTTLLTQINKKFSETDGGFDIVMWVVVSKTSEIYRIQEDIAKRLGLTGEEWDKKNENKRAVDIHNVLRRHKFVLLLDDIWEKVNLELVGVPYPSRENGSIVAFTTRSRDVCGRMGVDDPMQVSCLEPEDAWDLFQNKVGENTLKSHPDIPELAKQVAEKCRGLPLALNVIGETMACKSTVQEWRHAIDEEWKKTEVKMHDVVREMALWISSDLGKHKDQCIVRAGVGLHAVPEVKNWRAVRRMSLMKNELEKILGCPTCPQLTTLLLQKNHKLVNISGEFFRFMPNLVVLDLSWNSSLTGLPKKISEVETTNTSEFGVHEEFGEYAGVSKLLSLKTLRLQKSKKALDVNSAKELQLLEHIEVLTIDIFSKVEEESFKILTFPSMCNIRRIGIWKCGMKEIKVEMRTSSCFSSLSKVVIGQCDGLKELTWLLFAPNLTYLDARFAEQLEDIISEEKAASVTDENASIIIPFQKLECLSLSDLPKLKSIYWSPLSFPRLSELAVQEHCPKLKKLPLNSKSGTAGVELVVKYGENKWLEGVEWEDKATELRFLATCKSLYR.

The stretch at 25 to 73 forms a coiled coil; sequence SLPENLAALQKAIEVLKTKHDDVKRRVDKEEFLGRRHRLSQVQVEIERL. One can recognise an NB-ARC domain in the interval 114–418; that stretch reads EENLVAQVEE…NELEKILGCP (305 aa). Residue 156 to 163 coordinates ATP; sequence GMGGVGKT. LRR repeat units lie at residues 400 to 421, 422 to 444, and 447 to 469; these read AVRRMSLMKNELEKILGCPTCP, QLTTLLLQKNHKLVNISGEFFRF, and NLVVLDLSWNSSLTGLPKKISEV.

Belongs to the disease resistance NB-LRR family.

Probable disease resistance protein. The chain is Probable disease resistance protein At4g14610 from Arabidopsis thaliana (Mouse-ear cress).